We begin with the raw amino-acid sequence, 87 residues long: uncharacterized protein (87 aa).

2 consecutive transmembrane segments (helical) span residues 7–27 and 64–84; these read LFFIQIVISIFNSHLAVLYSI and GINIFSFSISLFLIFLTIPLF.

The protein resides in the membrane. This is an uncharacterized protein from Schizosaccharomyces pombe (strain 972 / ATCC 24843) (Fission yeast).